Consider the following 257-residue polypeptide: Homeobox protein EMX1 (257 aa).

The homeobox DNA-binding region spans 159 to 218; sequence PKRIRTAFSPSQLLRLERAFEKNHYVVGAERKQLAGSLSLSETQVKVWFQNRRTKYKRQK. Residues 216–257 form a disordered region; that stretch reads RQKLEEEGPESEQKKKGSHHINRWRIATKQANGEDIDVTSND. Residues 217-230 show a composition bias toward basic and acidic residues; that stretch reads QKLEEEGPESEQKK.

This sequence belongs to the EMX homeobox family. As to quaternary structure, interacts with WRD11 (via the N-terminal and the central portion of the protein); the interaction associates EMX1 with GLI3. Cerebral cortex. Expressed in the olfactory bulbs.

The protein localises to the nucleus. Its function is as follows. Transcription factor, which in cooperation with EMX2, acts to generate the boundary between the roof and archipallium in the developing brain. May function in combinations with OTX1/2 to specify cell fates in the developing central nervous system. This chain is Homeobox protein EMX1 (Emx1), found in Mus musculus (Mouse).